A 295-amino-acid chain; its full sequence is MAVDAKLIKELREITQAGMMDCKKALEASDNNIDNAIVWLRENGLAKAAKKTDRVAAEGIALAKENDQKIVILEVNSETDFVAKNEKFLSLVDEIANALLSSNASSLEEGLQVKTNSGLTIEQSLISATATIGEKIALRRFELVNKTSGSSVIYNHANKRVSTLLVFDNKLDSTDAYNVAMHVAAMAPKYINMDQIPDDFKNAEMHIIKEQAKDDAKLQAKPANVLENILKGKLSKRLAEVSLLDQLFVIDESFKVGDFLKSKHVSLVKMIRYEVGEGIEKVVTNFADEVAAQLK.

The tract at residues 79–82 (TDFV) is involved in Mg(2+) ion dislocation from EF-Tu.

The protein belongs to the EF-Ts family.

It localises to the cytoplasm. In terms of biological role, associates with the EF-Tu.GDP complex and induces the exchange of GDP to GTP. It remains bound to the aminoacyl-tRNA.EF-Tu.GTP complex up to the GTP hydrolysis stage on the ribosome. The sequence is that of Elongation factor Ts from Mycoplasma capricolum subsp. capricolum (strain California kid / ATCC 27343 / NCTC 10154).